The chain runs to 62 residues: Large ribosomal subunit protein bL28 (62 aa).

This sequence belongs to the bacterial ribosomal protein bL28 family.

This Streptococcus thermophilus (strain CNRZ 1066) protein is Large ribosomal subunit protein bL28.